Reading from the N-terminus, the 308-residue chain is tRNA dimethylallyltransferase (308 aa).

ATP is bound at residue 9-16; that stretch reads GPTAVGKT. 11–16 provides a ligand contact to substrate; sequence TAVGKT. Residues 34–37 are interaction with substrate tRNA; the sequence is DSMQ.

The protein belongs to the IPP transferase family. Monomer. It depends on Mg(2+) as a cofactor.

The enzyme catalyses adenosine(37) in tRNA + dimethylallyl diphosphate = N(6)-dimethylallyladenosine(37) in tRNA + diphosphate. Its function is as follows. Catalyzes the transfer of a dimethylallyl group onto the adenine at position 37 in tRNAs that read codons beginning with uridine, leading to the formation of N6-(dimethylallyl)adenosine (i(6)A). The polypeptide is tRNA dimethylallyltransferase (Lactobacillus delbrueckii subsp. bulgaricus (strain ATCC BAA-365 / Lb-18)).